Here is a 600-residue protein sequence, read N- to C-terminus: Calcium/calmodulin-dependent serine/threonine-protein kinase 1 (600 aa).

Positions 1–99 are disordered; sequence MGLCHGKSAA…GGFKRPFPPP (99 aa). Low complexity predominate over residues 24–56; it reads TRVAEAAAAPAKPASPAPSAAAAAAAPAKPGTP. Polar residues predominate over residues 74-85; sequence YKGSPANSSVAS. A Protein kinase domain is found at 147 to 409; it reads YELGREVGRG…AAQALCHPWI (263 aa). ATP contacts are provided by residues 153–161 and K179; that span reads VGRGHFGYT. The Proton acceptor role is filled by D275.

This sequence belongs to the protein kinase superfamily. Ser/Thr protein kinase family. Post-translationally, autophosphorylated. In terms of tissue distribution, highly expressed in roots in the zone of cell division. Expressed in leaf mesophyll cells and at lower levels in mature stems.

The catalysed reaction is L-seryl-[protein] + ATP = O-phospho-L-seryl-[protein] + ADP + H(+). It carries out the reaction L-threonyl-[protein] + ATP = O-phospho-L-threonyl-[protein] + ADP + H(+). Activated by the binding of calmodulin-like protein 1 (CML1) in the presence of Ca(2+). Functionally, possesses kinase activity in vitro. The protein is Calcium/calmodulin-dependent serine/threonine-protein kinase 1 (CAMK1) of Oryza sativa subsp. japonica (Rice).